Reading from the N-terminus, the 594-residue chain is NADH-ubiquinone oxidoreductase chain 5 (594 aa).

15 helical membrane-spanning segments follow: residues 1–21, 43–63, 87–107, 114–134, 137–157, 171–191, 211–233, 241–261, 272–292, 301–320, 325–347, 366–386, 409–429, 457–477, and 486–506; these read MNLF…PIMM, AFLI…EMII, IVFA…SMWY, INQF…LVTA, LFQL…LIGW, AILY…WFLS, LPLM…HPWL, TPVS…FLLI, LMQT…AMCA, IIAF…IGIN, AFLH…GSII, MPFT…VPFL, LLIT…IIFF, LMAG…PMTT, and LKMT…EITL.

Belongs to the complex I subunit 5 family. As to quaternary structure, core subunit of respiratory chain NADH dehydrogenase (Complex I) which is composed of 45 different subunits.

The protein resides in the mitochondrion inner membrane. It catalyses the reaction a ubiquinone + NADH + 5 H(+)(in) = a ubiquinol + NAD(+) + 4 H(+)(out). Functionally, core subunit of the mitochondrial membrane respiratory chain NADH dehydrogenase (Complex I) which catalyzes electron transfer from NADH through the respiratory chain, using ubiquinone as an electron acceptor. Essential for the catalytic activity and assembly of complex I. The sequence is that of NADH-ubiquinone oxidoreductase chain 5 (MT-ND5) from Hippopotamus amphibius (Hippopotamus).